The sequence spans 351 residues: Peptide chain release factor 1 (351 aa).

Glutamine 229 bears the N5-methylglutamine mark.

The protein belongs to the prokaryotic/mitochondrial release factor family. In terms of processing, methylated by PrmC. Methylation increases the termination efficiency of RF1.

The protein resides in the cytoplasm. In terms of biological role, peptide chain release factor 1 directs the termination of translation in response to the peptide chain termination codons UAG and UAA. This is Peptide chain release factor 1 from Dinoroseobacter shibae (strain DSM 16493 / NCIMB 14021 / DFL 12).